A 318-amino-acid polypeptide reads, in one-letter code: Mitochondrial coenzyme A transporter SLC25A42 (318 aa).

3 Solcar repeats span residues 31 to 117, 129 to 214, and 224 to 312; these read RQVL…YKRI, LPPW…LKSL, and PYPF…MQIL. The next 6 helical transmembrane spans lie at 33-53, 89-109, 135-155, 186-206, 230-250, and 293-313; these read VLSS…AVAP, LWRG…IQFS, LLAG…LDLV, LYFG…LSFF, MVFG…LDVV, and LKGP…QILL.

It belongs to the mitochondrial carrier (TC 2.A.29) family.

It localises to the mitochondrion inner membrane. It carries out the reaction ADP(out) + CoA(in) = ADP(in) + CoA(out). The enzyme catalyses 3'-dephospho-CoA(in) + ADP(out) = 3'-dephospho-CoA(out) + ADP(in). It catalyses the reaction adenosine 3',5'-bisphosphate(in) + ADP(out) = adenosine 3',5'-bisphosphate(out) + ADP(in). The catalysed reaction is AMP(in) + ADP(out) = AMP(out) + ADP(in). It carries out the reaction dADP(in) + ADP(out) = dADP(out) + ADP(in). The enzyme catalyses ADP(in) + ATP(out) = ADP(out) + ATP(in). Its function is as follows. Mitochondrial carrier mediating the transport of coenzyme A (CoA) in mitochondria in exchange for intramitochondrial (deoxy)adenine nucleotides and adenosine 3',5'-diphosphate. The sequence is that of Mitochondrial coenzyme A transporter SLC25A42 (Slc25a42) from Mus musculus (Mouse).